A 313-amino-acid chain; its full sequence is Ribosomal RNA small subunit methyltransferase H (313 aa).

S-adenosyl-L-methionine-binding positions include 35–37 (GGH), Asp-55, Phe-79, Asp-101, and Gln-108.

This sequence belongs to the methyltransferase superfamily. RsmH family.

The protein resides in the cytoplasm. The enzyme catalyses cytidine(1402) in 16S rRNA + S-adenosyl-L-methionine = N(4)-methylcytidine(1402) in 16S rRNA + S-adenosyl-L-homocysteine + H(+). Functionally, specifically methylates the N4 position of cytidine in position 1402 (C1402) of 16S rRNA. The protein is Ribosomal RNA small subunit methyltransferase H of Escherichia coli O7:K1 (strain IAI39 / ExPEC).